Consider the following 2197-residue polypeptide: Non-reducing polyketide synthase Preu6 (2197 aa).

Residues 14 to 253 (FFCPQSRAPP…HNPENAELAK (240 aa)) form an N-terminal acylcarrier protein transacylase domain (SAT) region. The Ketosynthase family 3 (KS3) domain maps to 375 to 797 (DDAIAITGAS…GSNAAVICVE (423 aa)). Catalysis depends on for beta-ketoacyl synthase activity residues Cys-546, His-681, and His-720. The interval 901–1198 (LVFSGQNTNA…SKPDSQVFQS (298 aa)) is malonyl-CoA:ACP transacylase (MAT) domain. The For acyl/malonyl transferase activity role is filled by Ser-988. The disordered stretch occupies residues 1258-1282 (ATEASQASTTSDTIQSTPTQTVQSP). A compositionally biased stretch (polar residues) spans 1260-1281 (EASQASTTSDTIQSTPTQTVQS). The interval 1276–1403 (TQTVQSPPKL…GRVILTESSV (128 aa)) is N-terminal hotdog fold. The 301-residue stretch at 1276–1576 (TQTVQSPPKL…FNKMEISKLA (301 aa)) folds into the PKS/mFAS DH domain. Residues 1284 to 1575 (KLISRLASLQ…RFNKMEISKL (292 aa)) form a product template (PT) domain region. His-1310 serves as the catalytic Proton acceptor; for dehydratase activity. Positions 1424–1576 (AEKLMSSRAY…FNKMEISKLA (153 aa)) are C-terminal hotdog fold. Asp-1487 functions as the Proton donor; for dehydratase activity in the catalytic mechanism. Polar residues predominate over residues 1581–1591 (SVNASSPTGGR). A disordered region spans residues 1581–1614 (SVNASSPTGGRTQPPAAPKTQAQPMASRPSPTPL). Carrier domains lie at 1639–1719 (NDIG…SQKM) and 1748–1824 (NSIT…ATPP). O-(pantetheine 4'-phosphoryl)serine is present on residues Ser-1673 and Ser-1782. The interval 1817–1841 (LGASATPPSTTGSSTPGDISTAATT) is disordered. The segment covering 1818-1833 (GASATPPSTTGSSTPG) has biased composition (low complexity). Residues 1870-2197 (DSYQVKTVEY…PGLDFLIQNA (328 aa)) form a thioesterase (TE) domain region. Residues Ser-1990 and Asp-2137 each act as for thioesterase activity in the active site.

Pantetheine 4'-phosphate is required as a cofactor.

The enzyme catalyses 6 malonyl-CoA + 2 acetyl-CoA + 5 H(+) = o-orsellinate depside + 6 CO2 + 8 CoA + H2O. In terms of biological role, non-reducing polyketide synthase; part of a gene cluster that mediates the biosynthesis of a yet unidentified natural product. The first step in the pathway is performed by Preu6 that condenses 2 acetyl-CoA starter units with 6 malonyl-CoA units to produce lecanoric acid (LA), also known as orsellinate depside, an intermediate that has significant antifungal activity against the plant pathogen Botryosphaeria berengeriana. The biosynthesis probably occurs via the formation of 2 orsellinate intermediates fused together by the C-terminal thioesterase (TE) domain that finally releases lecanoric acid. The sequence is that of Non-reducing polyketide synthase Preu6 from Preussia isomera (Coprophilous fungus).